A 472-amino-acid chain; its full sequence is Argininosuccinate lyase (472 aa).

This sequence belongs to the lyase 1 family. Argininosuccinate lyase subfamily.

The protein localises to the cytoplasm. It catalyses the reaction 2-(N(omega)-L-arginino)succinate = fumarate + L-arginine. It participates in amino-acid biosynthesis; L-arginine biosynthesis; L-arginine from L-ornithine and carbamoyl phosphate: step 3/3. The sequence is that of Argininosuccinate lyase from Synechococcus sp. (strain CC9902).